Here is a 304-residue protein sequence, read N- to C-terminus: Thyroxine 5-deiodinase (304 aa).

The interval 1–23 (MPRQATSRLVVGEGEGSQGASGP) is disordered. The Cytoplasmic segment spans residues 1 to 44 (MPRQATSRLVVGEGEGSQGASGPAATMLRSLLLHSLRLCAQTAS). Residues 45-67 (CLVLFPRFLGTAFMLWLLDFLCI) form a helical; Signal-anchor for type II membrane protein membrane-spanning segment. At 68 to 304 (RKHFLGRRRR…QLHGARPRRV (237 aa)) the chain is on the extracellular side. Positions 78–99 (GQPEPEVELNSEGEEVPPDDPP) are disordered. Residues 82 to 95 (PEVELNSEGEEVPP) show a composition bias toward acidic residues. Sec170 is a catalytic residue. Position 170 (Sec170) is a non-standard amino acid, selenocysteine.

This sequence belongs to the iodothyronine deiodinase family. Monomer. Homodimer. May undergo minor heretodimerization with DIO1 and DIO2. Expressed in placenta and several fetal tissues.

It localises to the cell membrane. Its subcellular location is the endosome membrane. The catalysed reaction is 3,3',5'-triiodo-L-thyronine + iodide + A + H(+) = L-thyroxine + AH2. It carries out the reaction 3,3'-diiodo-L-thyronine + iodide + A + H(+) = 3,3',5-triiodo-L-thyronine + AH2. It catalyses the reaction 3-iodo-L-thyronine + iodide + A + H(+) = 3,5-diiodo-L-thyronine + AH2. The enzyme catalyses L-thyronine + iodide + A + H(+) = 3-iodo-L-thyronine + AH2. The catalysed reaction is 3',5'-diiodo-L-thyronine + iodide + A + H(+) = 3,3',5'-triiodo-L-thyronine + AH2. It carries out the reaction 3'-iodo-L-thyronine + iodide + A + H(+) = 3,3'-diiodo-L-thyronine + AH2. It catalyses the reaction 3,3',5'-triiodothyronamine + iodide + A + H(+) = 3,3',5,5'-tetraiodothyronamine + AH2. The enzyme catalyses 3',5'-diiodothyronamine + iodide + A + H(+) = 3,3',5'-triiodothyronamine + AH2. The catalysed reaction is 3,3'-diiodothyronamine + iodide + A + H(+) = 3,3',5-triiodothyronamine + AH2. It carries out the reaction 3-iodothyronamine + iodide + A + H(+) = 3,5-diiodothyronamine + AH2. It catalyses the reaction 3'-iodothyronamine + iodide + A + H(+) = 3,3'-diiodothyronamine + AH2. The enzyme catalyses thyronamine + iodide + A + H(+) = 3-iodothyronamine + AH2. Its function is as follows. Plays a crucial role in the metabolism of thyroid hormones (TH) and has specific roles in TH activation and inactivation by deiodination. Catalyzes the deiodination of L-thyroxine (T4) to 3,3',5'-triiodothyronine (rT3), 3,5,3'-triiodothyronine (T3) to 3,3'-diiodothyronine (3,3'-T2), 3,5-diiodothyronine (3,5-T2) to 3-monoiodothyronine (3-T1), rT3 to 3',5'-diiodothyronine (3',5'-T2) and 3,3'-T2 to 3'-monoiodothyronine (3'-T1) via inner-ring deiodination (IRD). Catalyzes the deiodination of 3-T1 to L-thyronine (T0) via outer-ring deiodination (ORD). Catalyzes the tyrosyl ring deiodinations of 3,3',5,5'-tetraiodothyronamine, 3,3',5'-triiodothyronamine, 3,5,3'-triiodothyronamine, 3,5-diiodothyronamine, 3,3'-diiodothyronamine and 3-iodothyronamine. The sequence is that of Thyroxine 5-deiodinase (DIO3) from Homo sapiens (Human).